The sequence spans 460 residues: Argininosuccinate lyase (460 aa).

This sequence belongs to the lyase 1 family. Argininosuccinate lyase subfamily.

Its subcellular location is the cytoplasm. It carries out the reaction 2-(N(omega)-L-arginino)succinate = fumarate + L-arginine. The protein operates within amino-acid biosynthesis; L-arginine biosynthesis; L-arginine from L-ornithine and carbamoyl phosphate: step 3/3. In Sulfurimonas denitrificans (strain ATCC 33889 / DSM 1251) (Thiomicrospira denitrificans (strain ATCC 33889 / DSM 1251)), this protein is Argininosuccinate lyase.